The sequence spans 349 residues: tRNA pseudouridine synthase D (349 aa).

A substrate-binding site is contributed by Phe27. Asp80 serves as the catalytic Nucleophile. Asn129 is a binding site for substrate. Positions 155 to 303 constitute a TRUD domain; the sequence is GVPNYFGAQR…VEAARRAMLL (149 aa). Phe329 contributes to the substrate binding site.

This sequence belongs to the pseudouridine synthase TruD family.

It catalyses the reaction uridine(13) in tRNA = pseudouridine(13) in tRNA. Functionally, responsible for synthesis of pseudouridine from uracil-13 in transfer RNAs. This chain is tRNA pseudouridine synthase D, found in Escherichia coli (strain K12 / MC4100 / BW2952).